The chain runs to 619 residues: Chaperone protein DnaK (619 aa).

The residue at position 175 (T175) is a Phosphothreonine; by autocatalysis. The segment at 578–619 (NGGAQGEGFDPNNMGGANAGTGAANSNDDNVVDADFEVQDDK) is disordered. A compositionally biased stretch (low complexity) spans 589-606 (NNMGGANAGTGAANSNDD). Acidic residues predominate over residues 607-619 (NVVDADFEVQDDK).

The protein belongs to the heat shock protein 70 family.

Acts as a chaperone. The chain is Chaperone protein DnaK from Clostridium perfringens (strain SM101 / Type A).